The following is a 208-amino-acid chain: uncharacterized protein (208 aa).

This is an uncharacterized protein from Saccharum officinarum (Sugarcane).